Reading from the N-terminus, the 145-residue chain is D-aminoacyl-tRNA deacylase (145 aa).

The short motif at 137-138 (GP) is the Gly-cisPro motif, important for rejection of L-amino acids element.

It belongs to the DTD family. Homodimer.

It localises to the cytoplasm. The enzyme catalyses glycyl-tRNA(Ala) + H2O = tRNA(Ala) + glycine + H(+). It carries out the reaction a D-aminoacyl-tRNA + H2O = a tRNA + a D-alpha-amino acid + H(+). Its function is as follows. An aminoacyl-tRNA editing enzyme that deacylates mischarged D-aminoacyl-tRNAs. Also deacylates mischarged glycyl-tRNA(Ala), protecting cells against glycine mischarging by AlaRS. Acts via tRNA-based rather than protein-based catalysis; rejects L-amino acids rather than detecting D-amino acids in the active site. By recycling D-aminoacyl-tRNA to D-amino acids and free tRNA molecules, this enzyme counteracts the toxicity associated with the formation of D-aminoacyl-tRNA entities in vivo and helps enforce protein L-homochirality. This is D-aminoacyl-tRNA deacylase from Pseudomonas fluorescens (strain Pf0-1).